Here is a 426-residue protein sequence, read N- to C-terminus: CAAX prenyl protease 1 homolog (426 aa).

The Lumenal portion of the chain corresponds to 1-3 (MVN). Residues 4–24 (YFIISISFFLLEHFYSFYLNF) form a helical membrane-spanning segment. Residues 25-70 (RQSKLLKNLTKVPEYCKDRITQEDFKKSQEYSKAKLDYKTLTSTIQ) are Cytoplasmic-facing. The chain crosses the membrane as a helical span at residues 71 to 91 (VLTTLLSFYYPVYPYFWNLSL). The Lumenal segment spans residues 92–106 (ELAEKIGYPNEIIRS). The chain crosses the membrane as a helical span at residues 107–127 (CFFFAFTVGVSVITEIPFSYY). At 128-150 (YQFILEEKFGYNRMTRTLFIKDK) the chain is on the cytoplasmic side. The chain crosses the membrane as a helical span at residues 151-171 (IISTLLMIGFGLPILSLAIFI). Residues 172–178 (INWSGPQ) are Lumenal-facing. Residues 179–199 (LWFYCWLLLVAITLLSITIYP) traverse the membrane as a helical segment. Over 200–294 (TFIQPLFNKF…GHYKMSHTLK (95 aa)) the chain is Cytoplasmic. Zn(2+) is bound at residue His-282. Glu-283 is a catalytic residue. His-286 is a Zn(2+) binding site. The helical transmembrane segment at 295–315 (QMLLVQVHLVTLLYAFSLLIN) threads the bilayer. The Lumenal segment spans residues 316–333 (DDQLYQQFGFVSSKDSVL). A helical transmembrane segment spans residues 334 to 354 (VGLTLFMFLYSPIDRIFSLLI). Topologically, residues 355-426 (NIFSRKYEFQ…KVALYKLKNK (72 aa)) are cytoplasmic. Position 362 (Glu-362) interacts with Zn(2+).

Belongs to the peptidase M48B family. Zn(2+) is required as a cofactor.

The protein localises to the endoplasmic reticulum membrane. The enzyme catalyses Hydrolyzes the peptide bond -P2-(S-farnesyl or geranylgeranyl)C-P1'-P2'-P3'-COOH where P1' and P2' are amino acids with aliphatic side chains and P3' is any C-terminal residue.. Proteolytically removes the C-terminal three residues of farnesylated proteins. This chain is CAAX prenyl protease 1 homolog (zmpste24), found in Dictyostelium discoideum (Social amoeba).